A 74-amino-acid chain; its full sequence is UPF0235 protein tsr1994 (74 aa).

The protein belongs to the UPF0235 family.

This is UPF0235 protein tsr1994 from Thermosynechococcus vestitus (strain NIES-2133 / IAM M-273 / BP-1).